We begin with the raw amino-acid sequence, 123 residues long: Large ribosomal subunit protein uL18 (123 aa).

This sequence belongs to the universal ribosomal protein uL18 family. As to quaternary structure, part of the 50S ribosomal subunit; part of the 5S rRNA/L5/L18/L25 subcomplex. Contacts the 5S and 23S rRNAs.

Functionally, this is one of the proteins that bind and probably mediate the attachment of the 5S RNA into the large ribosomal subunit, where it forms part of the central protuberance. The protein is Large ribosomal subunit protein uL18 of Symbiobacterium thermophilum (strain DSM 24528 / JCM 14929 / IAM 14863 / T).